The sequence spans 645 residues: MRPRKAFLLLLLLGLVQLLAVAGAEGPDEDSSNRENAIEDEEEEEEEDDDEEEDDLEVKEENGVLVLNDANFDNFVADKDTVLLEFYAPWCGHCKQFAPEYEKIANILKDKDPPIPVAKIDATSASVLASRFDVSGYPTIKILKKGQAVDYEGSRTQEEIVAKVREVSQPDWTPPPEVTLVLTKENFDEVVNDADIILVEFYAPWCGHCKKLAPEYEKAAKELSKRSPPIPLAKVDATAETDLAKRFDVSGYPTLKIFRKGRPYDYNGPREKYGIVDYMIEQSGPPSKEILTLKQVQEFLKDGDDVIIIGVFKGESDPAYQQYQDAANNLREDYKFHHTFSTEIAKFLKVSQGQLVVMQPEKFQSKYEPRSHMMDVQGSTQDSAIKDFVLKYALPLVGHRKVSNDAKRYTRRPLVVVYYSVDFSFDYRAATQFWRSKVLEVAKDFPEYTFAIADEEDYAGEVKDLGLSESGEDVNAAILDESGKKFAMEPEEFDSDTLREFVTAFKKGKLKPVIKSQPVPKNNKGPVKVVVGKTFDSIVMDPKKDVLIEFYAPWCGHCKQLEPVYNSLAKKYKGQKGLVIAKMDATANDVPSDRYKVEGFPTIYFAPSGDKKNPVKFEGGDRDLEHLSKFIEEHATKLSRTKEEL.

The N-terminal stretch at 1-20 (MRPRKAFLLLLLLGLVQLLA) is a signal peptide. 2 consecutive Thioredoxin domains span residues 21-169 (VAGA…EVSQ) and 158-301 (EEIV…EFLK). The interval 24–58 (AEGPDEDSSNRENAIEDEEEEEEEDDDEEEDDLEV) is disordered. Residues 38–58 (IEDEEEEEEEDDDEEEDDLEV) are compositionally biased toward acidic residues. The CXXC signature appears at 91-94 (CGHC). 2 cysteine pairs are disulfide-bonded: cysteine 91–cysteine 94 and cysteine 206–cysteine 209. Residue lysine 366 is modified to N6-acetyllysine. Positions 505–636 (FKKGKLKPVI…LSKFIEEHAT (132 aa)) constitute a Thioredoxin 3 domain. The short motif at 555 to 558 (CGHC) is the CXXC element. An intrachain disulfide couples cysteine 555 to cysteine 558. The Prevents secretion from ER motif lies at 642-645 (KEEL).

The protein belongs to the protein disulfide isomerase family. In terms of assembly, part of a large chaperone multiprotein complex comprising DNAJB11, HSP90B1, HSPA5, HYOU, PDIA2, PDIA4, PDIA6, PPIB, SDF2L1, UGGT1 and very small amounts of ERP29, but not, or at very low levels, CALR nor CANX. Component of a complex containing at least CRELD2, MANF, MATN3 and PDIA4. (Microbial infection) Interacts with Human astrovirus-1 and Human astrovirus-8 spike protein VP25; this interaction seems to facilitate the uncoating during virus entry into the cell. Does not interact with Human astrovirus-2 spike protein VP25.

It is found in the endoplasmic reticulum lumen. The protein resides in the melanosome. It catalyses the reaction Catalyzes the rearrangement of -S-S- bonds in proteins.. The sequence is that of Protein disulfide-isomerase A4 (PDIA4) from Homo sapiens (Human).